The sequence spans 433 residues: Zinc finger and SCAN domain-containing protein 4 (433 aa).

In terms of domain architecture, SCAN box spans 44–126 (RMVLNSFQDS…RFIEDLTDDS (83 aa)). 3 stretches are compositionally biased toward polar residues: residues 165-185 (TTRE…SLET), 195-210 (GWNS…ENIT), and 277-299 (QPEQ…STCE). 2 disordered regions span residues 165–210 (TTRE…ENIT) and 275–301 (ISQP…CEVH). 4 C2H2-type zinc fingers span residues 312 to 334 (YKCE…QRRH), 340 to 362 (FVCP…QIIH), 368 to 390 (FTCS…ERIH), and 396 to 418 (YTCP…MRTH).

The protein resides in the nucleus. The protein localises to the chromosome. It localises to the telomere. Functionally, embryonic stem (ES) cell-specific transcription factor required to regulate ES cell pluripotency. Binds telomeres and plays a key role in genomic stability in ES cells by regulating telomere elongation. Acts as an activator of spontaneous telomere sister chromatid exchange (T-SCE) and telomere elongation in undifferentiated ES cells. This chain is Zinc finger and SCAN domain-containing protein 4 (ZSCAN4), found in Homo sapiens (Human).